Consider the following 449-residue polypeptide: Signal recognition particle protein (449 aa).

GTP contacts are provided by residues 109–116, 191–195, and 249–252; these read GLQGGGKT, DTAGR, and SRID.

Belongs to the GTP-binding SRP family. SRP54 subfamily. Part of the signal recognition particle protein translocation system, which is composed of SRP and FtsY. SRP is a ribonucleoprotein composed of Ffh and a 4.5S RNA molecule.

The protein resides in the cytoplasm. The catalysed reaction is GTP + H2O = GDP + phosphate + H(+). In terms of biological role, involved in targeting and insertion of nascent membrane proteins into the cytoplasmic membrane. Binds to the hydrophobic signal sequence of the ribosome-nascent chain (RNC) as it emerges from the ribosomes. The SRP-RNC complex is then targeted to the cytoplasmic membrane where it interacts with the SRP receptor FtsY. Interaction with FtsY leads to the transfer of the RNC complex to the Sec translocase for insertion into the membrane, the hydrolysis of GTP by both Ffh and FtsY, and the dissociation of the SRP-FtsY complex into the individual components. This Rickettsia prowazekii (strain Madrid E) protein is Signal recognition particle protein.